The following is a 131-amino-acid chain: MMELLKLNIVTPQGSIFSGDVKSVTLPGAEGEFGVLPGHADLLSLLNAGAIEFEKSNGKTELVAVNWGQVKVDAVSVDVLADGAIAIGGDSESEVAMAIANARTLLEEATDNNVAISSVVSRIESAAKNSL.

The protein belongs to the ATPase epsilon chain family. As to quaternary structure, F-type ATPases have 2 components, CF(1) - the catalytic core - and CF(0) - the membrane proton channel. CF(1) has five subunits: alpha(3), beta(3), gamma(1), delta(1), epsilon(1). CF(0) has three main subunits: a, b and c.

Its subcellular location is the cell inner membrane. Functionally, produces ATP from ADP in the presence of a proton gradient across the membrane. In Wolinella succinogenes (strain ATCC 29543 / DSM 1740 / CCUG 13145 / JCM 31913 / LMG 7466 / NCTC 11488 / FDC 602W) (Vibrio succinogenes), this protein is ATP synthase epsilon chain.